A 182-amino-acid chain; its full sequence is Ribosome-recycling factor (182 aa).

It belongs to the RRF family.

Its subcellular location is the cytoplasm. Responsible for the release of ribosomes from messenger RNA at the termination of protein biosynthesis. May increase the efficiency of translation by recycling ribosomes from one round of translation to another. This Nostoc punctiforme (strain ATCC 29133 / PCC 73102) protein is Ribosome-recycling factor.